Reading from the N-terminus, the 977-residue chain is Macrophage colony-stimulating factor 1 receptor (977 aa).

The signal sequence occupies residues 1-19 (MELGPPLVLLLATVWHGQG). The Extracellular segment spans residues 20–515 (APVIEPSGPE…QLPDESLFTP (496 aa)). 5 consecutive Ig-like C2-type domains span residues 24 to 104 (EPSG…VKDP), 107 to 197 (SWNL…KVNR), 204 to 298 (QIKL…VVES), 299 to 397 (AYLN…LTLR), and 398 to 503 (YPPE…SLGQ). 3 cysteine pairs are disulfide-bonded: Cys42-Cys84, Cys127-Cys177, and Cys224-Cys278. Residues Asn45 and Asn73 are each glycosylated (N-linked (GlcNAc...) asparagine). Residues Asn302, Asn335, Asn389, Asn410, Asn449, Asn478, and Asn491 are each glycosylated (N-linked (GlcNAc...) asparagine). Residues Cys417 and Cys483 are joined by a disulfide bond. The chain crosses the membrane as a helical span at residues 516–536 (VVVACMSVMSLLVLLLLLLLY). Residues 537–977 (KYKQKPKYQV…LLQPNNYQFC (441 aa)) are Cytoplasmic-facing. The segment at 540–572 (QKPKYQVRWKIIERYEGNSYTFIDPTQLPYNEK) is regulatory juxtamembrane domain. A phosphotyrosine; by autocatalysis mark is found at Tyr544 and Tyr559. The region spanning 580 to 913 (LQFGKTLGAG…ICFLLQEQAR (334 aa)) is the Protein kinase domain. ATP is bound by residues 586-594 (LGAGAFGKV) and Lys614. Tyr697 and Tyr706 each carry phosphotyrosine; by autocatalysis. A Phosphoserine modification is found at Ser711. The residue at position 721 (Tyr721) is a Phosphotyrosine; by autocatalysis. Asp776 acts as the Proton acceptor in catalysis. The interval 794 to 816 (DFGLARDIMNDSNYVVKGNARLP) is activation loop. Tyr807 and Tyr921 each carry phosphotyrosine; by autocatalysis. The segment at 921–957 (YANLPSSGGSSGSDSGGGSSGGSSSEPEEESSSEHLA) is disordered. Over residues 929 to 941 (GSSGSDSGGGSSG) the composition is skewed to gly residues. Tyr974 bears the Phosphotyrosine; by autocatalysis mark.

This sequence belongs to the protein kinase superfamily. Tyr protein kinase family. CSF-1/PDGF receptor subfamily. As to quaternary structure, monomer. Homodimer. Interacts with CSF1 and IL34. Interaction with dimeric CSF1 or IL34 leads to receptor homodimerization. Interacts with INPPL1/SHIP2 and THOC5. Interacts (tyrosine phosphorylated) with PLCG2 (via SH2 domain). Interacts (tyrosine phosphorylated) with PIK3R1 (via SH2 domain). Interacts (tyrosine phosphorylated) with FYN, YES1 and SRC (via SH2 domain). Interacts (tyrosine phosphorylated) with CBL, GRB2 and SLA2. Autophosphorylated in response to CSF1 or IL34 binding. Phosphorylation at Tyr-559 is important for normal down-regulation of signaling by ubiquitination, internalization and degradation. Phosphorylation at Tyr-559 and Tyr-807 is important for interaction with SRC family members, including FYN, YES1 and SRC, and for subsequent activation of these protein kinases. Phosphorylation at Tyr-697 and Tyr-921 is important for interaction with GRB2. Phosphorylation at Tyr-721 is important for interaction with PIK3R1. Phosphorylation at Tyr-721 and Tyr-807 is important for interaction with PLCG2. Phosphorylation at Tyr-974 is important for interaction with CBL. Dephosphorylation by PTPN2 negatively regulates downstream signaling and macrophage differentiation. Post-translationally, ubiquitinated. Becomes rapidly polyubiquitinated after autophosphorylation, leading to its degradation. Widely expressed.

It is found in the cell membrane. It catalyses the reaction L-tyrosyl-[protein] + ATP = O-phospho-L-tyrosyl-[protein] + ADP + H(+). With respect to regulation, present in an inactive conformation in the absence of bound ligand. CSF1 or IL34 binding leads to dimerization and activation by autophosphorylation on tyrosine residues. Inhibited by imatinib/STI-571 (Gleevec), dasatinib, sunitinib/SU11248, lestaurtinib/CEP-701, midostaurin/PKC-412, Ki20227, linifanib/ABT-869, Axitinib/AG013736, sorafenib/BAY 43-9006 and GW2580. In terms of biological role, tyrosine-protein kinase that acts as a cell-surface receptor for CSF1 and IL34 and plays an essential role in the regulation of survival, proliferation and differentiation of hematopoietic precursor cells, especially mononuclear phagocytes, such as macrophages and monocytes. Promotes the release of pro-inflammatory chemokines in response to IL34 and CSF1, and thereby plays an important role in innate immunity and in inflammatory processes. Plays an important role in the regulation of osteoclast proliferation and differentiation, the regulation of bone resorption, and is required for normal bone and tooth development. Required for normal male and female fertility, and for normal development of milk ducts and acinar structures in the mammary gland during pregnancy. Promotes reorganization of the actin cytoskeleton, regulates formation of membrane ruffles, cell adhesion and cell migration, and promotes cancer cell invasion. Activates several signaling pathways in response to ligand binding, including the ERK1/2 and the JNK pathway. Phosphorylates PIK3R1, PLCG2, GRB2, SLA2 and CBL. Activation of PLCG2 leads to the production of the cellular signaling molecules diacylglycerol and inositol 1,4,5-trisphosphate, that then lead to the activation of protein kinase C family members, especially PRKCD. Phosphorylation of PIK3R1, the regulatory subunit of phosphatidylinositol 3-kinase, leads to activation of the AKT1 signaling pathway. Activated CSF1R also mediates activation of the MAP kinases MAPK1/ERK2 and/or MAPK3/ERK1, and of the SRC family kinases SRC, FYN and YES1. Activated CSF1R transmits signals both via proteins that directly interact with phosphorylated tyrosine residues in its intracellular domain, or via adapter proteins, such as GRB2. Promotes activation of STAT family members STAT3, STAT5A and/or STAT5B. Promotes tyrosine phosphorylation of SHC1 and INPP5D/SHIP-1. Receptor signaling is down-regulated by protein phosphatases, such as INPP5D/SHIP-1, that dephosphorylate the receptor and its downstream effectors, and by rapid internalization of the activated receptor. In the central nervous system, may play a role in the development of microglia macrophages. The chain is Macrophage colony-stimulating factor 1 receptor (Csf1r) from Mus musculus (Mouse).